The sequence spans 464 residues: MDSNAAEKSSKEIIEDLQRQLLTEKNRNRTLVEELKQLRDSHARIQIVTENEEEYITNKFMKYLNQLKKEKEELALKVEQEEEYLTNTLQKKMLTIMKEKVDLENQLEQEEEFIVNKLQKQIQDVMKDKKALEKRLENEINDHRSLLKLQDEVIVLRDKIKELESNGNKKEDIDALKAENFVLGQKIIREQEKLSKVNSENTKLMSNLEIDDERNFNNKSKRNRSISFPTSMASTTTTTTTSITSSTTSITSSTSSINSSGSSSTNNTCNNNSSSNIPTSPLSCSSNSSGGGGGSGSLNNSCNSNCSNSSNSSNNNCNNNNNNNNGNSKLSTGVPITRSRSSSSNSNPCLITKIVKEGWLKRKSISSSNQETLEKRYYEISTDGEMREYFDETKQIPTSQYINLDTCFQIDIVTDNPNHPGYSDIKLYIKTNSISPVEIITFSTSSNDCNDWKDTISSLMPLKR.

Positions 8–210 (KSSKEIIEDL…NTKLMSNLEI (203 aa)) form a coiled coil. Disordered regions lie at residues 215–290 (NFNN…NSSG) and 317–347 (CNNN…SNSN). Composition is skewed to low complexity over residues 234 to 288 (STTT…SSNS), 317 to 328 (CNNNNNNNNGNS), and 338 to 347 (RSRSSSSNSN). The region spanning 353–461 (KIVKEGWLKR…WKDTISSLMP (109 aa)) is the PH domain.

In Dictyostelium discoideum (Social amoeba), this protein is PH domain-containing rcdII (rcdII).